The primary structure comprises 1318 residues: MEERGRETQMPVARYGGPFIMVRLFGQDGEANIQEQRLYELLSDPRSALGLDPGPLIAENLLLVALRGTNNDPRPQRQERARELALVGILLGNGEQGEHLGTESALEASGNNYVYAYGPDWMARPSTWSAEIQQFLRLLGATYVLRVEMGRQFGFEVHRSRPSFRQFQAINHLVLFDNALRKYDSGQVAAGFQRALLVAGPETADTRPDLRKLNEWVFGGRAAGGRQLADELKIVSALRDTYSGHLVLQPTETLDTWKVLSRDTRTAHSLEHGFIHAAGTIQANCPQLFMRRQHPGLFPFVNAIASSLGWYYQTATGPGADARAAARRQQAFQTRAAAECHAKSGVPVVAGFYRTINATLKGGEGLQPTMFNGELGAIKHQALDTVRYDYGHYLIMLGPFQPWSGLTAPPCPYAESSWAQAAVQTALELFSALYPAPCISGYARPPGPSAVIEHLRSLVPKGGLLLFLSHLPDDVKDGLGEMGPARATGPGMQQFVGSYFLNPACSNVFITVRQRGEKINGRTVLQALGRACDMAGCQHYVLGSTVPLGGLNFVNDLASPVSTAEMMDDFSPFFTVEFPPIQEEGASSPVPLDVDESMDISPSYELPWLSLESCLTSILSHPTVGSKEHLVRHTDRVSGGRVAQQPGVGPLDLPLADYAFVAHSQVWTRPGGAPPLPYRTWDRMTEKLLVSAKPGGENVKVSGTVITLGEQGYKVSLDLREGTRLAMAEALLNAAFAPILDPEDVLLTLHLHLDPSRADNSAVMEAMTAASDYARGLGVKLTFGSASCPETGSSASSFMTVVASVSAPGEFSGPLITPVLQKTGSLLIAVRCGDGKIQGGSLFEQLFSDVATTPRAPEALSLKNLFRAVQQLVKSGIVLSGHDISDGGLVTCLVEMALAGQRGVTITMPVASDYLPEMFAEHPGLVFEVEERSVGEVLQTLRSMNMYPAVLGRVGEQGPDQMFEVQHGPETVLRQSLRLLLGTWSSFASEQYECLRPDRINRSMHVSDYGYNEALAVSPLTGKNLSPRRLVTEPDPRCQVAVLCAPGTRGHESLLAAFTNAGCLCRRVFFREVRDNTFLDKYVGLAIGGVHGARDSALAGRATVALINRSPALRDAILKFLNRPDTFSVALGELGVQVLAGLGAVGSTDNPPAPGVEVNVQRSPLILAPNASGMFESRWLNISIPATTSSVMLRGLRGCVLPCWVQGSCLGLQFTNLGMPYVLQNAHQIACHFHSNGTDAWRFAMNYPRNPTEQGNIAGLCSRDGRHLALLCDPSLCTDFWQWEHIPPAFGHPTGCSPWTLMFQAAHLWSLRHGRPSE.

Belongs to the herpesviridae MTP family. In terms of assembly, interacts with host DAXX; this interaction disrupts the chromatin remodeling complex ATRX:DAXX and thus allows viral transcription. Interacts with host SMC6; this interaction targets SMC5-SMC6 complex for proteasomal degradation.

It is found in the virion tegument. Its subcellular location is the host nucleus. In terms of biological role, tegument protein that plays a role in the inhibition of host intrinsic defenses to promote viral early gene activation. Interacts with host DAXX and thereby disrupts the complex between DAXX and ATRX. Suppresses the DAXX-ATRX dependent deposition of histone H3.3 on viral chromatin allowing viral transcription. Targets also host SMC5/6 for proteasomal degradation in a CUL7 and calpain-dependent manner to support nuclear membrane-less replication compartment formation and lytic virus replication. This chain is Major tegument protein, found in Epstein-Barr virus (strain GD1) (HHV-4).